A 230-amino-acid chain; its full sequence is MTIALDTLGLIRLMTWLSPAFPVGGFAYSGGLEKAVEDGLIDGGGTATGRQEALLAWLTSLLDHGTIWNDAVLLAEAWRVWNVPQSLTEVSDLALALAGSRERYQETTALGAAFREAARAWADPLSALSPNPVAYPVAVGAVGASQGIGCEAVLAAYLHAALSQQVSAGIRLSLIGQTGGLAILSRLEAPVARLAARAVQTGLDDLGSATIAADIVSARHEGQSVRLFRS.

Belongs to the UreF family. UreD, UreF and UreG form a complex that acts as a GTP-hydrolysis-dependent molecular chaperone, activating the urease apoprotein by helping to assemble the nickel containing metallocenter of UreC. The UreE protein probably delivers the nickel.

The protein localises to the cytoplasm. Functionally, required for maturation of urease via the functional incorporation of the urease nickel metallocenter. This Allorhizobium ampelinum (strain ATCC BAA-846 / DSM 112012 / S4) (Agrobacterium vitis (strain S4)) protein is Urease accessory protein UreF.